Here is a 372-residue protein sequence, read N- to C-terminus: Maltose/maltodextrin import ATP-binding protein MalK (372 aa).

Residues 4-234 (VSLRNVGKSY…PANRFVAGFI (231 aa)) enclose the ABC transporter domain. 36 to 43 (GPSGCGKS) is a binding site for ATP.

The protein belongs to the ABC transporter superfamily. Maltooligosaccharide importer (TC 3.A.1.1.1) family. The complex is composed of two ATP-binding proteins (MalK), two transmembrane proteins (MalG and MalK) and a solute-binding protein (MalE).

Its subcellular location is the cell inner membrane. It carries out the reaction D-maltose(out) + ATP + H2O = D-maltose(in) + ADP + phosphate + H(+). In terms of biological role, part of the ABC transporter complex MalEFGK involved in maltose/maltodextrin import. Responsible for energy coupling to the transport system. This Mannheimia succiniciproducens (strain KCTC 0769BP / MBEL55E) protein is Maltose/maltodextrin import ATP-binding protein MalK.